Reading from the N-terminus, the 1069-residue chain is Enteropeptidase (1069 aa).

The Cytoplasmic segment spans residues 1–18 (MKSSRDEAVGHHSISSFE). Residues 19-47 (VMLSALFIMLMVFSIGLIAVSWLAVKESE) form a helical; Signal-anchor for type II membrane protein membrane-spanning segment. At 48-1069 (GDAALGKSHE…FIEWIHSFLH (1022 aa)) the chain is on the extracellular side. The SEA domain maps to 54–169 (KSHEVRGTFK…NSIDITASLS (116 aa)). Residues Asn-147, Asn-197, and Asn-212 are each glycosylated (N-linked (GlcNAc...) asparagine). Residues 227–268 (IECQPGSRPCAHAWNCVATDLFCDGEVNCPDGSDEDTGLCAT) form the LDL-receptor class A 1 domain. 4 disulfides stabilise this stretch: Cys-229-Cys-242, Cys-236-Cys-255, Cys-249-Cys-266, and Cys-270-Cys-298. In terms of domain architecture, CUB 1 spans 270–379 (CDGRFLLTGD…IGFNATYSTF (110 aa)). N-linked (GlcNAc...) asparagine glycosylation is found at Asn-373, Asn-380, Asn-433, Asn-515, Asn-579, and Asn-675. In terms of domain architecture, MAM spans 387–549 (YEKIDCTFDD…ISLTNGICSQ (163 aa)). Cys-569 and Cys-597 form a disulfide bridge. The CUB 2 domain maps to 569 to 679 (CGGPFELWEP…KGFKANFTSG (111 aa)). The LDL-receptor class A 2 domain maps to 686–724 (EPCQDDEFQCKDGNCIPLGNLCDSYPHCRDGSDEASCVR). Intrachain disulfides connect Cys-688–Cys-700, Cys-695–Cys-713, and Cys-707–Cys-722. An SRCR domain is found at 723–816 (VRFLNGTRSN…LILLQCNHKS (94 aa)). Residues Asn-727, Asn-751, Asn-770, and Asn-791 are each glycosylated (N-linked (GlcNAc...) asparagine). Cystine bridges form between Cys-802–Cys-812, Cys-817–Cys-945, Cys-859–Cys-875, Cys-959–Cys-1027, Cys-991–Cys-1006, and Cys-1017–Cys-1045. In terms of domain architecture, Peptidase S1 spans 830-1069 (IVGGSDAQAG…FIEWIHSFLH (240 aa)). His-874 functions as the Charge relay system in the catalytic mechanism. Asn-897 carries N-linked (GlcNAc...) asparagine glycosylation. Asp-925 acts as the Charge relay system in catalysis. N-linked (GlcNAc...) asparagine glycosylation is found at Asn-936 and Asn-999. The active-site Charge relay system is Ser-1021.

The protein belongs to the peptidase S1 family. Heterodimer of a catalytic (light) chain and a multidomain (heavy) chain linked by a disulfide bond. The chains are derived from a single precursor that is cleaved by a trypsin-like protease.

The protein localises to the membrane. The enzyme catalyses Activation of trypsinogen by selective cleavage of 6-Lys-|-Ile-7 bond.. Its function is as follows. Responsible for initiating activation of pancreatic proteolytic proenzymes (trypsin, chymotrypsin and carboxypeptidase A). It catalyzes the conversion of trypsinogen to trypsin which in turn activates other proenzymes including chymotrypsinogen, procarboxypeptidases, and proelastases. This chain is Enteropeptidase (Tmprss15), found in Mus musculus (Mouse).